Reading from the N-terminus, the 1978-residue chain is Dedicator of cytokinesis protein 4 (1978 aa).

Residues 6 to 67 form the SH3 domain; that stretch reads EHEKYGVVIA…PSSYVHLKNA (62 aa). A Phosphotyrosine modification is found at Tyr-167. Thr-193 carries the post-translational modification Phosphothreonine. Positions 401–574 constitute a C2 DOCK-type domain; sequence RNDLYITVER…ESFWITSFLC (174 aa). A DOCKER domain is found at 1199 to 1605; sequence KTELNKEEMY…FGIQEFPACI (407 aa). Ser-1608, Ser-1616, Ser-1623, Ser-1627, Ser-1629, and Ser-1640 each carry phosphoserine. Disordered regions lie at residues 1657–1738 and 1751–1978; these read SQAS…IYPT and IGDG…VSQL. The segment covering 1681 to 1712 has biased composition (low complexity); it reads PSPSTSSLSSTHSASPNVTSSAPSSARASPLL. At Ser-1778 the chain carries Phosphoserine. The SH3-binding signature appears at 1797–1803; it reads PPVPPRP. Over residues 1804-1818 the composition is skewed to polar residues; sequence TQTASPARHTTSVSP. The span at 1842–1872 shows a compositional bias: low complexity; it reads SPGLSSNSPVLSGSYSSGISSLSRCSTSETS. The span at 1873–1882 shows a compositional bias: polar residues; the sequence is GFENQANEQS. Residues 1885-1895 are compositionally biased toward pro residues; that stretch reads VPVPVPVPVPV. A compositionally biased stretch (basic and acidic residues) spans 1953–1966; the sequence is SHLENGTRRTEPGP.

It belongs to the DOCK family. In terms of assembly, interacts with nucleotide-free Rap1; functions as a guanine nucleotide exchange factor (GEF) for Rap1. Interacts (via DOCKER domain) with RAC1; functions as a guanine nucleotide exchange factor (GEF) for RAC1. Interacts with the SH3 domain of CRK. Interacts with FASLG. Interacts with ELMO2 and EPHA2; mediates activation of RAC1 by EPHA2. Interacts with USH1C (via PDZ 1 domain). In terms of tissue distribution, expressed in inner ear (at protein level).

It localises to the cell membrane. The protein localises to the cytoplasm. The protein resides in the cytosol. Functions as a guanine nucleotide exchange factor (GEF) that promotes the exchange of GDP to GTP, converting inactive GDP-bound small GTPases into their active GTP-bound form. Involved in regulation of adherens junction between cells. Plays a role in cell migration. Its function is as follows. Has a higher guanine nucleotide exchange factor activity compared to other isoforms. The chain is Dedicator of cytokinesis protein 4 (Dock4) from Mus musculus (Mouse).